We begin with the raw amino-acid sequence, 110 residues long: Large ribosomal subunit protein uL22 (110 aa).

This sequence belongs to the universal ribosomal protein uL22 family. Part of the 50S ribosomal subunit.

Its function is as follows. This protein binds specifically to 23S rRNA; its binding is stimulated by other ribosomal proteins, e.g. L4, L17, and L20. It is important during the early stages of 50S assembly. It makes multiple contacts with different domains of the 23S rRNA in the assembled 50S subunit and ribosome. In terms of biological role, the globular domain of the protein is located near the polypeptide exit tunnel on the outside of the subunit, while an extended beta-hairpin is found that lines the wall of the exit tunnel in the center of the 70S ribosome. The chain is Large ribosomal subunit protein uL22 from Vesicomyosocius okutanii subsp. Calyptogena okutanii (strain HA).